Here is a 220-residue protein sequence, read N- to C-terminus: Superoxide dismutase [Fe] (220 aa).

Residues H26, H73, D164, and H168 each coordinate Fe cation.

The protein belongs to the iron/manganese superoxide dismutase family. Homodimer. Fe cation serves as cofactor.

The enzyme catalyses 2 superoxide + 2 H(+) = H2O2 + O2. Its function is as follows. Destroys superoxide anion radicals which are normally produced within the cells and which are toxic to biological systems. The protein is Superoxide dismutase [Fe] (sodB) of Campylobacter coli.